The primary structure comprises 476 residues: ATP synthase subunit beta (476 aa).

154–161 (GGAGVGKT) contributes to the ATP binding site.

The protein belongs to the ATPase alpha/beta chains family. As to quaternary structure, F-type ATPases have 2 components, CF(1) - the catalytic core - and CF(0) - the membrane proton channel. CF(1) has five subunits: alpha(3), beta(3), gamma(1), delta(1), epsilon(1). CF(0) has four main subunits: a(1), b(1), b'(1) and c(9-12).

The protein localises to the cell inner membrane. The enzyme catalyses ATP + H2O + 4 H(+)(in) = ADP + phosphate + 5 H(+)(out). Functionally, produces ATP from ADP in the presence of a proton gradient across the membrane. The catalytic sites are hosted primarily by the beta subunits. The sequence is that of ATP synthase subunit beta from Rhodopseudomonas palustris (strain ATCC BAA-98 / CGA009).